We begin with the raw amino-acid sequence, 396 residues long: Flavohemoprotein (396 aa).

The region spanning M1 to A136 is the Globin domain. H85 is a binding site for heme b. Active-site charge relay system residues include Y95 and E135. A reductase region spans residues G147–L396. Positions E150–A255 constitute an FAD-binding FR-type domain. FAD is bound by residues Y188 and R204–S207. G268–P273 contacts NADP(+). Position 389-392 (C389–P392) interacts with FAD.

It belongs to the globin family. Two-domain flavohemoproteins subfamily. This sequence in the C-terminal section; belongs to the flavoprotein pyridine nucleotide cytochrome reductase family. Heme b serves as cofactor. Requires FAD as cofactor.

The catalysed reaction is 2 nitric oxide + NADPH + 2 O2 = 2 nitrate + NADP(+) + H(+). The enzyme catalyses 2 nitric oxide + NADH + 2 O2 = 2 nitrate + NAD(+) + H(+). In terms of biological role, is involved in NO detoxification in an aerobic process, termed nitric oxide dioxygenase (NOD) reaction that utilizes O(2) and NAD(P)H to convert NO to nitrate, which protects the bacterium from various noxious nitrogen compounds. Therefore, plays a central role in the inducible response to nitrosative stress. The polypeptide is Flavohemoprotein (Escherichia coli O6:H1 (strain CFT073 / ATCC 700928 / UPEC)).